The following is an 827-amino-acid chain: Disintegrin and metalloproteinase domain-containing protein 17 (827 aa).

The first 17 residues, 1 to 17, serve as a signal peptide directing secretion; that stretch reads MRQRLLFLTTLVPFVLA. Positions 18–214 are excised as a propeptide; that stretch reads PRPPEEPGSG…SEEFVRRVKR (197 aa). The N-linked (GlcNAc...) asparagine glycan is linked to asparagine 157. Residues 182 to 189 carry the Cysteine switch motif; the sequence is KVCGYLNA. A Zn(2+)-binding site is contributed by cysteine 184. Over 215–671 the chain is Extracellular; sequence RAEPNPLKNT…NTFGKFLADN (457 aa). The Peptidase M12B domain maps to 223 to 474; sequence NTCKLLVVAD…KAQECFQERS (252 aa). 3 disulfides stabilise this stretch: cysteine 225-cysteine 333, cysteine 365-cysteine 469, and cysteine 423-cysteine 453. N-linked (GlcNAc...) asparagine glycosylation is present at asparagine 264. Zn(2+) is bound at residue histidine 405. Residue glutamate 406 is part of the active site. 2 residues coordinate Zn(2+): histidine 409 and histidine 415. 4 N-linked (GlcNAc...) asparagine glycosylation sites follow: asparagine 452, asparagine 498, asparagine 539, and asparagine 551. The region spanning 475–563 is the Disintegrin domain; sequence NKVCGNSRVD…ECPPPGDAED (89 aa). Disulfide bonds link cysteine 534–cysteine 555, cysteine 573–cysteine 582, cysteine 578–cysteine 591, and cysteine 593–cysteine 600. The interval 603–671 is crambin-like; it reads CCRNLSGPCV…NTFGKFLADN (69 aa). Asparagine 606 is a glycosylation site (N-linked (GlcNAc...) asparagine). A helical membrane pass occupies residues 672–692; sequence IVGSVLVFSLIFWIPFSILVH. At 693–827 the chain is on the cytoplasmic side; the sequence is CVDKKLDKQY…SRVDSKETEC (135 aa). The short motif at 731 to 738 is the SH3-binding element; sequence PAPQTPGR. Position 735 is a phosphothreonine; by MAPK14 (threonine 735). A Phosphothreonine modification is found at threonine 764. Residues 766 to 827 form a disordered region; sequence QEDPSTDSHV…SRVDSKETEC (62 aa). Position 770 is a phosphoserine (serine 770). 3 stretches are compositionally biased toward basic and acidic residues: residues 771 to 784, 794 to 810, and 818 to 827; these read TDSH…EKDP, SFED…EKAA, and SRVDSKETEC. Phosphoserine occurs at positions 794 and 822.

In terms of assembly, interacts with MAD2L1, MAPK14 and MUC1. Interacts with iRhom1/RHBDF1 and iRhom2/RHBDF2. Interacts with FRMD8 via its interaction with iRhom1/RHBDF1 and iRhom2/RHBDF2. Interacts with TSPAN8. The cofactor is Zn(2+). In terms of processing, the precursor is cleaved by a furin endopeptidase. Phosphorylated. Stimulation by growth factor or phorbol 12-myristate 13-acetate induces phosphorylation of Ser-822 but decreases phosphorylation of Ser-794. Phosphorylation at Thr-735 by MAPK14 is required for ADAM17-mediated ectodomain shedding.

It localises to the membrane. It catalyses the reaction Narrow endopeptidase specificity. Cleaves Pro-Leu-Ala-Gln-Ala-|-Val-Arg-Ser-Ser-Ser in the membrane-bound, 26-kDa form of tumor necrosis factor alpha (TNFalpha). Similarly cleaves other membrane-anchored, cell-surface proteins to 'shed' the extracellular domains.. Functionally, transmembrane metalloprotease which mediates the ectodomain shedding of a myriad of transmembrane proteins including adhesion proteins, growth factor precursors and cytokines important for inflammation and immunity. Cleaves the membrane-bound precursor of TNF-alpha to its mature soluble form. Responsible for the proteolytical release of soluble JAM3 from endothelial cells surface. Responsible for the proteolytic release of several other cell-surface proteins, including p75 TNF-receptor, interleukin 1 receptor type II, p55 TNF-receptor, transforming growth factor-alpha, L-selectin, growth hormone receptor, MUC1 and the amyloid precursor protein. Acts as an activator of Notch pathway by mediating cleavage of Notch, generating the membrane-associated intermediate fragment called Notch extracellular truncation (NEXT). Plays a role in the proteolytic processing of ACE2. Plays a role in hemostasis through shedding of GP1BA, the platelet glycoprotein Ib alpha chain. Mediates the proteolytic cleavage of LAG3, leading to release the secreted form of LAG3. Mediates the proteolytic cleavage of IL6R, leading to the release of secreted form of IL6R. Mediates the proteolytic cleavage and shedding of FCGR3A upon NK cell stimulation, a mechanism that allows for increased NK cell motility and detachment from opsonized target cells. Cleaves TREM2, resulting in shedding of the TREM2 ectodomain. This Rattus norvegicus (Rat) protein is Disintegrin and metalloproteinase domain-containing protein 17 (Adam17).